We begin with the raw amino-acid sequence, 96 residues long: Large ribosomal subunit protein uL23 (96 aa).

The protein belongs to the universal ribosomal protein uL23 family. As to quaternary structure, part of the 50S ribosomal subunit. Contacts protein L29, and trigger factor when it is bound to the ribosome.

One of the early assembly proteins it binds 23S rRNA. One of the proteins that surrounds the polypeptide exit tunnel on the outside of the ribosome. Forms the main docking site for trigger factor binding to the ribosome. This chain is Large ribosomal subunit protein uL23, found in Nitratidesulfovibrio vulgaris (strain DSM 19637 / Miyazaki F) (Desulfovibrio vulgaris).